The primary structure comprises 179 residues: UPF0227 protein VP0969 (179 aa).

It belongs to the UPF0227 family.

The chain is UPF0227 protein VP0969 from Vibrio parahaemolyticus serotype O3:K6 (strain RIMD 2210633).